A 706-amino-acid chain; its full sequence is Glutamine-dependent NAD(+) synthetase (706 aa).

In terms of domain architecture, CN hydrolase spans 5 to 275; sequence VTVATCALNQ…VEVLTATLDL (271 aa). Glu-45 functions as the Proton acceptor; for glutaminase activity in the catalytic mechanism. Lys-114 serves as the catalytic For glutaminase activity. Cys-175 (nucleophile; for glutaminase activity) is an active-site residue. Residues 325-706 form a ligase region; the sequence is YHSPAEEISL…RQRQELDGVD (382 aa). 355–362 serves as a coordination point for ATP; the sequence is PLSGGVDS. The active site involves Ser-357.

In the C-terminal section; belongs to the NAD synthetase family. In terms of assembly, homohexamer.

The catalysed reaction is deamido-NAD(+) + L-glutamine + ATP + H2O = L-glutamate + AMP + diphosphate + NAD(+) + H(+). It participates in cofactor biosynthesis; NAD(+) biosynthesis; NAD(+) from deamido-NAD(+) (L-Gln route): step 1/1. In terms of biological role, catalyzes the ATP-dependent amidation of deamido-NAD to form NAD. Uses L-glutamine as a nitrogen source. This is Glutamine-dependent NAD(+) synthetase (NADSYN1) from Bos taurus (Bovine).